The chain runs to 482 residues: Butyrophilin-like protein 2 (482 aa).

At 1–6 (MVDFPG) the chain is on the cytoplasmic side. Residues 7–23 (YNLSGAVASFLFILLTM) traverse the membrane as a helical; Signal-anchor for type II membrane protein segment. The Extracellular segment spans residues 24 to 482 (KQSEDFRVIG…VAVGLPRKRS (459 aa)). Ig-like V-type domains follow at residues 29-140 (FRVI…LLLK), 142-234 (AGLG…SVIS), and 236-355 (PEKL…ASLD). Disulfide bonds link Cys50-Cys124, Cys164-Cys218, and Cys267-Cys341. Residue Asn210 is glycosylated (N-linked (GlcNAc...) asparagine). Residue Asn427 is glycosylated (N-linked (GlcNAc...) asparagine).

It belongs to the immunoglobulin superfamily. BTN/MOG family. In terms of tissue distribution, expressed in brain, heart, kidney, liver, pancreas, ovary, leukocyte, small intestine, testis and thymus.

It is found in the membrane. Its function is as follows. Negative regulator of T-cell proliferation. The chain is Butyrophilin-like protein 2 from Homo sapiens (Human).